The chain runs to 166 residues: MAELTHLDERGQARMVDVAEKPETHRVAVARGRVSLRPETLQLVREGRAAKGDVLAVARVAGIMAAKRTAELIPLCHPLPLTKVEVDVRTNEQDTCLEIEARVETVSRTGVEMEALTAVAVAALTVYDMLKAVDRGMTIDRIQLIEKAGGRSGTWRREDDEARHAR.

Substrate is bound by residues 75 to 77 (LCH) and 113 to 114 (ME). The active site involves Asp-128.

Belongs to the MoaC family. Homohexamer; trimer of dimers.

It catalyses the reaction (8S)-3',8-cyclo-7,8-dihydroguanosine 5'-triphosphate = cyclic pyranopterin phosphate + diphosphate. The protein operates within cofactor biosynthesis; molybdopterin biosynthesis. Its function is as follows. Catalyzes the conversion of (8S)-3',8-cyclo-7,8-dihydroguanosine 5'-triphosphate to cyclic pyranopterin monophosphate (cPMP). This is Cyclic pyranopterin monophosphate synthase from Thermomicrobium roseum (strain ATCC 27502 / DSM 5159 / P-2).